The chain runs to 462 residues: Trigger factor (462 aa).

A PPIase FKBP-type domain is found at 163–259; sequence TDYVNIDLQR…VNDVKRRDLP (97 aa). Residues 439-462 are disordered; that stretch reads SREEFEEEMQQQQQQQAQRQRMAP. Low complexity predominate over residues 448 to 462; sequence QQQQQQQAQRQRMAP.

The protein belongs to the FKBP-type PPIase family. Tig subfamily.

The protein resides in the cytoplasm. It catalyses the reaction [protein]-peptidylproline (omega=180) = [protein]-peptidylproline (omega=0). In terms of biological role, involved in protein export. Acts as a chaperone by maintaining the newly synthesized protein in an open conformation. Functions as a peptidyl-prolyl cis-trans isomerase. This chain is Trigger factor, found in Salinibacter ruber (strain DSM 13855 / M31).